The chain runs to 110 residues: Coiled-coil-helix-coiled-coil-helix domain-containing protein 5 (110 aa).

At Met1 the chain carries N-acetylmethionine. CHCH domains follow at residues 9-52 (ARYC…PIIR) and 55-97 (RQAC…QPPR). 4 consecutive short sequence motifs (cx9C motif) follow at residues 12 to 22 (CGRELEQYGQC), 34 to 44 (CHYLKMSIAQC), 58 to 68 (CAQPFEAFEEC), and 79 to 89 (CAEHMRRFLQC). Cystine bridges form between Cys12-Cys44, Cys22-Cys34, Cys58-Cys89, and Cys68-Cys79.

In terms of assembly, monomer.

Its subcellular location is the mitochondrion intermembrane space. The protein is Coiled-coil-helix-coiled-coil-helix domain-containing protein 5 (CHCHD5) of Homo sapiens (Human).